Here is a 199-residue protein sequence, read N- to C-terminus: Probable molybdenum cofactor guanylyltransferase (199 aa).

Residues L6–G8, K18, D65, and D97 each bind GTP. D97 contacts Mg(2+).

It belongs to the MobA family. Mg(2+) serves as cofactor.

Its subcellular location is the cytoplasm. The catalysed reaction is Mo-molybdopterin + GTP + H(+) = Mo-molybdopterin guanine dinucleotide + diphosphate. Functionally, transfers a GMP moiety from GTP to Mo-molybdopterin (Mo-MPT) cofactor (Moco or molybdenum cofactor) to form Mo-molybdopterin guanine dinucleotide (Mo-MGD) cofactor. In Staphylococcus aureus (strain COL), this protein is Probable molybdenum cofactor guanylyltransferase.